A 1737-amino-acid chain; its full sequence is Myosin-M heavy chain (1737 aa).

Residues 4–55 (LEGDIVWVPHTVNGYCRGKIIGYNEKNQVTVRLLELNEEIKINEQLIQNYNQ) enclose the Myosin N-terminal SH3-like domain. The Myosin motor domain occupies 59-886 (KDFSDMVEIQ…LYIYLEKKRY (828 aa)). 154–161 (GESGSGKT) provides a ligand contact to ATP. Residues 640–727 (KSNDNNSNNN…NNNSSNNKKS (88 aa)) are disordered. Low complexity-rich tracts occupy residues 641–663 (SNDNNSNNNNSNNNSSSSSSSQS) and 679–724 (NSGS…SSNN). Residues 754–761 (YIRCIKPN) form an actin-binding region. IQ domains are found at residues 889 to 918 (LVDSVLKIQAFFKMIKIRNQYKRNKESSLF) and 912 to 941 (NKESSLFLQTLIRAQRAKKDFEQLVILENK). A coiled-coil region spans residues 926-1039 (QRAKKDFEQL…KKKNEQNLSL (114 aa)). A compositionally biased stretch (basic and acidic residues) spans 947–1028 (RKKELERQRK…IEKKRKEEEK (82 aa)). Disordered stretches follow at residues 947–1099 (RKKE…PSTK), 1117–1199 (LHGS…PNFN), 1266–1290 (GINKPIPQRTISSSENSPLSRANSS), and 1304–1364 (SLST…SNED). Positions 1044–1070 (ITNSPSLINTTTTTTTTTTTTTNTSSP) are enriched in low complexity. The span at 1071-1081 (PLSPPISPRPS) shows a compositional bias: pro residues. Residues 1082–1098 (TPSSTSSSSSTTSSPST) are compositionally biased toward low complexity. Residues 1121–1131 (SHSDKNSKEDN) are compositionally biased toward basic and acidic residues. Residues 1132 to 1141 (NSNNNNNGDS) show a composition bias toward low complexity. Over residues 1143-1153 (IILSSDSSFGQ) the composition is skewed to polar residues. Over residues 1162–1171 (PTPPPPPPLK) the composition is skewed to pro residues. Polar residues-rich tracts occupy residues 1180 to 1198 (GVENNSSPNLWSHRNSPNF) and 1274 to 1288 (RTISSSENSPLSRAN). Positions 1304–1359 (SLSTSTTPSTPTTPKTPTTLSSSSVSTSTSLSSVSSSVSSSSSSSIPTPIIESTPS) are enriched in low complexity. The 184-residue stretch at 1389-1572 (FRIKIINELI…SDIVQSINEA (184 aa)) folds into the DH domain. Residues 1603–1714 (TLLMEGTVSA…WFKQIKALIQ (112 aa)) enclose the PH domain.

The protein belongs to the TRAFAC class myosin-kinesin ATPase superfamily. Myosin family. As to quaternary structure, monomer.

The protein resides in the cytoplasm. Its function is as follows. Myosins are actin-based motor molecules with ATPase activity. Involved in macropinocytosis and remodeling of actin cytoskeleton. The polypeptide is Myosin-M heavy chain (myoM) (Dictyostelium discoideum (Social amoeba)).